The chain runs to 598 residues: Aspartate--tRNA(Asp/Asn) ligase (598 aa).

Glu-174 serves as a coordination point for L-aspartate. An aspartate region spans residues 198–201 (QQLK). Arg-220 contacts L-aspartate. ATP-binding positions include 220–222 (RDE) and Gln-229. Position 458 (His-458) interacts with L-aspartate. Glu-492 lines the ATP pocket. Residue Arg-499 participates in L-aspartate binding. Residue 544–547 (GIDR) coordinates ATP.

This sequence belongs to the class-II aminoacyl-tRNA synthetase family. Type 1 subfamily. Homodimer.

Its subcellular location is the cytoplasm. The catalysed reaction is tRNA(Asx) + L-aspartate + ATP = L-aspartyl-tRNA(Asx) + AMP + diphosphate. Aspartyl-tRNA synthetase with relaxed tRNA specificity since it is able to aspartylate not only its cognate tRNA(Asp) but also tRNA(Asn). Reaction proceeds in two steps: L-aspartate is first activated by ATP to form Asp-AMP and then transferred to the acceptor end of tRNA(Asp/Asn). This chain is Aspartate--tRNA(Asp/Asn) ligase, found in Dehalococcoides mccartyi (strain ATCC BAA-2266 / KCTC 15142 / 195) (Dehalococcoides ethenogenes (strain 195)).